Here is a 295-residue protein sequence, read N- to C-terminus: MSDTPLTFAPKTPLQEFWFYFKQNRGALIGLIFILIVALISILAPYIAPFDPTEQNRTALLLPPAWYEGGNPAYLLGTDDIGRDILSRIIYGTRISVFAGFIIVLLSCAFGTSLGLISGYYGGVLDTIIIRLIDIMLAIPNLLLTIVVVSILEPSLANATLAIAVVSIPSYVRLTRAAMMNEKNRDYVTSSKVAGAGILRLMFIVILPNCLAPLIVQMTMGISNAILELATLGFLGIGAKPPTPELGTMLSEARGFMQAANWLVTIPGLVILSLVLAFNLMGDGLRDALDPKLKQ.

The next 7 helical transmembrane spans lie at 27–47, 97–117, 132–152, 156–178, 202–222, 226–246, and 262–282; these read ALIGLIFILIVALISILAPYI, VFAGFIIVLLSCAFGTSLGLI, LIDIMLAIPNLLLTIVVVSIL, LANATLAIAVVSIPSYVRLTRAA, MFIVILPNCLAPLIVQMTMGI, ILELATLGFLGIGAKPPTPEL, and WLVTIPGLVILSLVLAFNLMG. Residues 93–282 enclose the ABC transmembrane type-1 domain; it reads TRISVFAGFI…SLVLAFNLMG (190 aa).

This sequence belongs to the binding-protein-dependent transport system permease family. OppBC subfamily.

Its subcellular location is the cell inner membrane. Its function is as follows. Part of the ABC transporter DppBCDF involved in dipeptide transport. Responsible for the translocation of the substrate across the membrane. The polypeptide is Dipeptide transport system permease protein DppC (dppC) (Haemophilus influenzae (strain ATCC 51907 / DSM 11121 / KW20 / Rd)).